We begin with the raw amino-acid sequence, 808 residues long: Probable E3 ubiquitin-protein ligase MARCHF10 (808 aa).

3 disordered regions span residues 33 to 81 (LRRQ…LTEP), 101 to 268 (QTSV…RKAS), and 284 to 415 (SRRE…EVGV). The segment covering 34–49 (RRQEYRRDPNEKKRDQ) has biased composition (basic and acidic residues). The segment covering 237–249 (QAFQGKNSPQVLS) has biased composition (polar residues). Composition is skewed to basic and acidic residues over residues 330–349 (KNFE…RSEP) and 379–397 (LPDR…ENAK). Residues 651–721 (DSEEEGDLCR…EMCKQGLLVD (71 aa)) form an RING-CH-type zinc finger. Positions 659, 662, 677, 679, 687, 690, 711, and 714 each coordinate Zn(2+). The interval 773-808 (ERERLSRNYPQPRTEENENSELGDGNEGSISQSQVV) is disordered.

It catalyses the reaction S-ubiquitinyl-[E2 ubiquitin-conjugating enzyme]-L-cysteine + [acceptor protein]-L-lysine = [E2 ubiquitin-conjugating enzyme]-L-cysteine + N(6)-ubiquitinyl-[acceptor protein]-L-lysine.. It participates in protein modification; protein ubiquitination. Functionally, E3 ubiquitin-protein ligase. E3 ubiquitin ligases accept ubiquitin from an E2 ubiquitin-conjugating enzyme in the form of a thioester and then directly transfer the ubiquitin to targeted substrates. The polypeptide is Probable E3 ubiquitin-protein ligase MARCHF10 (Homo sapiens (Human)).